Consider the following 551-residue polypeptide: L-lactate permease (551 aa).

Helical transmembrane passes span 13-33 (NIWL…FALI), 37-57 (LKGY…ALLF), 70-90 (VYGF…AVFV), 131-151 (GAAG…GLGF), 159-179 (LCLI…PILV), 194-214 (MVGR…MAIM), 244-264 (FIGP…CLTL), 366-386 (FDWF…SIVW), 405-425 (LALP…SNYS), 438-458 (TGHA…FLTG), 494-514 (VTGK…VGLV), and 530-550 (IFTC…TWMI).

This sequence belongs to the lactate permease family.

The protein localises to the cell inner membrane. It carries out the reaction (S)-lactate(in) + H(+)(in) = (S)-lactate(out) + H(+)(out). The enzyme catalyses (R)-lactate(in) + H(+)(in) = (R)-lactate(out) + H(+)(out). The catalysed reaction is glycolate(in) + H(+)(in) = glycolate(out) + H(+)(out). Its function is as follows. Uptake of L-lactate across the membrane. Can also transport D-lactate and glycolate. Seems to be driven by a proton motive force. The chain is L-lactate permease (lldP) from Escherichia coli O6:H1 (strain CFT073 / ATCC 700928 / UPEC).